Reading from the N-terminus, the 237-residue chain is Ig heavy chain Mem5 (237 aa).

Ig-like domains lie at 1–119 and 126–218; these read EVKL…LTVS and PSVY…KKIE. Cysteines 22 and 98 form a disulfide. A d segment region spans residues 101–105; sequence VDYGT. The interval 106–120 is JH2 segment; that stretch reads NYDYWGQGTTLTVSS. Cys147 and Cys202 are joined by a disulfide.

The protein resides in the secreted. In terms of biological role, anti-influenza H3N2 neuraminidase antibody. This chain is Ig heavy chain Mem5, found in Mus musculus (Mouse).